The primary structure comprises 119 residues: Flagellar transcriptional regulator FlhD (119 aa).

This sequence belongs to the FlhD family. Homodimer; disulfide-linked. Forms a heterohexamer composed of two FlhC and four FlhD subunits. Each FlhC binds a FlhD dimer, forming a heterotrimer, and a hexamer assembles by dimerization of two heterotrimers.

It localises to the cytoplasm. Functions in complex with FlhC as a master transcriptional regulator that regulates transcription of several flagellar and non-flagellar operons by binding to their promoter region. Activates expression of class 2 flagellar genes, including fliA, which is a flagellum-specific sigma factor that turns on the class 3 genes. Also regulates genes whose products function in a variety of physiological pathways. The polypeptide is Flagellar transcriptional regulator FlhD (Escherichia fergusonii (strain ATCC 35469 / DSM 13698 / CCUG 18766 / IAM 14443 / JCM 21226 / LMG 7866 / NBRC 102419 / NCTC 12128 / CDC 0568-73)).